The chain runs to 428 residues: Divergent protein kinase domain 1A (428 aa).

Residues 1–27 (MARGLFSRAWLSKTHHFQARLSYIRVK) lie on the Cytoplasmic side of the membrane. The chain crosses the membrane as a helical span at residues 28–48 (YLFLTWLAVFVSSWVVYVQYS). The Lumenal segment spans residues 49 to 428 (TYTELCRGRE…WKQISHTTDS (380 aa)).

Belongs to the DIPK family. In terms of processing, among the many cysteines in the lumenal domain, most are probably involved in disulfide bonds.

It is found in the endoplasmic reticulum membrane. The polypeptide is Divergent protein kinase domain 1A (dipk1a) (Danio rerio (Zebrafish)).